Consider the following 89-residue polypeptide: Small ribosomal subunit protein uS15 (89 aa).

The protein belongs to the universal ribosomal protein uS15 family. As to quaternary structure, part of the 30S ribosomal subunit. Forms a bridge to the 50S subunit in the 70S ribosome, contacting the 23S rRNA.

Its function is as follows. One of the primary rRNA binding proteins, it binds directly to 16S rRNA where it helps nucleate assembly of the platform of the 30S subunit by binding and bridging several RNA helices of the 16S rRNA. Forms an intersubunit bridge (bridge B4) with the 23S rRNA of the 50S subunit in the ribosome. This chain is Small ribosomal subunit protein uS15, found in Exiguobacterium sibiricum (strain DSM 17290 / CCUG 55495 / CIP 109462 / JCM 13490 / 255-15).